A 304-amino-acid chain; its full sequence is Histone H1.8 (304 aa).

The span at 1–24 shows a compositional bias: low complexity; it reads MAPGSVSSVSSSSFPSRDTSPSGS. 3 disordered regions span residues 1–38, 110–248, and 270–304; these read MAPG…PSCR, SKAK…NSVA, and TVQE…NTQA. The region spanning 45-123 is the H15 domain; that stretch reads RNPTMLHMVL…GATGSFKLVP (79 aa). Residues 132–144 show a composition bias toward low complexity; sequence APKAGRGAAGAKE. Composition is skewed to basic and acidic residues over residues 153-166, 189-202, and 225-237; these read LKKD…MEKG, KPKE…KQDK, and ANAH…EKSK. The short motif at 154-170 is the Nuclear localization signal element; it reads KKDQVGKATMEKGQKRR. Residues 270-281 are compositionally biased toward polar residues; the sequence is TVQETKVPTPSQ.

This sequence belongs to the histone H1/H5 family. In terms of tissue distribution, oocyte-specific.

The protein localises to the cytoplasm. The protein resides in the nucleus. Its subcellular location is the chromosome. In terms of biological role, may play a key role in the control of gene expression during oogenesis and early embryogenesis, presumably through the perturbation of chromatin structure. Essential for meiotic maturation of germinal vesicle-stage oocytes. The somatic type linker histone H1c is rapidly replaced by H1oo in a donor nucleus transplanted into an oocyte. The greater mobility of H1oo as compared to H1c may contribute to this rapid replacement and increased instability of the embryonic chromatin structure. The rapid replacement of H1c with H1oo may play an important role in nuclear remodeling. This Mus musculus (Mouse) protein is Histone H1.8.